The primary structure comprises 191 residues: Probable DNA-directed RNA polymerase subunit delta (191 aa).

The region spanning 14-83 is the HTH HARE-type domain; sequence LSMIEVARAI…GENKWGLRSW (70 aa). A disordered region spans residues 118–191; sequence DEDAIDYRDD…EDEEDEEPVL (74 aa).

It belongs to the RpoE family. As to quaternary structure, RNAP is composed of a core of 2 alpha, a beta and a beta' subunits. The core is associated with a delta subunit and one of several sigma factors.

Participates in both the initiation and recycling phases of transcription. In the presence of the delta subunit, RNAP displays an increased specificity of transcription, a decreased affinity for nucleic acids, and an increased efficiency of RNA synthesis because of enhanced recycling. This chain is Probable DNA-directed RNA polymerase subunit delta, found in Streptococcus pyogenes serotype M18 (strain MGAS8232).